A 156-amino-acid chain; its full sequence is Small ribosomal subunit protein uS7 (156 aa).

The protein belongs to the universal ribosomal protein uS7 family. As to quaternary structure, part of the 30S ribosomal subunit. Contacts proteins S9 and S11.

Its function is as follows. One of the primary rRNA binding proteins, it binds directly to 16S rRNA where it nucleates assembly of the head domain of the 30S subunit. Is located at the subunit interface close to the decoding center, probably blocks exit of the E-site tRNA. This is Small ribosomal subunit protein uS7 from Desulfitobacterium hafniense (strain Y51).